Reading from the N-terminus, the 112-residue chain is METLLKVLSGTLLWQLTWVRSQQPVQSPQAVILREGEDAVINCSSSKALYSVHWYRQKHGEAPVFLMILLKGGEQKGHDKISASFNEKKQQSSLYLTASQLSYSGTYFCGTE.

A signal peptide spans 1–21 (METLLKVLSGTLLWQLTWVRS). Residues 24–112 (PVQSPQAVIL…YSGTYFCGTE (89 aa)) form the Ig-like domain. Asn42 is a glycosylation site (N-linked (GlcNAc...) asparagine). Cys43 and Cys109 are disulfide-bonded.

As to quaternary structure, alpha-beta TR is a heterodimer composed of an alpha and beta chain; disulfide-linked. The alpha-beta TR is associated with the transmembrane signaling CD3 coreceptor proteins to form the TR-CD3 (TcR or TCR). The assembly of alpha-beta TR heterodimers with CD3 occurs in the endoplasmic reticulum where a single alpha-beta TR heterodimer associates with one CD3D-CD3E heterodimer, one CD3G-CD3E heterodimer and one CD247 homodimer forming a stable octameric structure. CD3D-CD3E and CD3G-CD3E heterodimers preferentially associate with TR alpha and TR beta chains, respectively. The association of the CD247 homodimer is the last step of TcR assembly in the endoplasmic reticulum and is required for transport to the cell surface.

It is found in the cell membrane. Its function is as follows. V region of the variable domain of T cell receptor (TR) alpha chain that participates in the antigen recognition. Alpha-beta T cell receptors are antigen specific receptors which are essential to the immune response and are present on the cell surface of T lymphocytes. Recognize peptide-major histocompatibility (MH) (pMH) complexes that are displayed by antigen presenting cells (APC), a prerequisite for efficient T cell adaptive immunity against pathogens. Binding of alpha-beta TR to pMH complex initiates TR-CD3 clustering on the cell surface and intracellular activation of LCK that phosphorylates the ITAM motifs of CD3G, CD3D, CD3E and CD247 enabling the recruitment of ZAP70. In turn ZAP70 phosphorylates LAT, which recruits numerous signaling molecules to form the LAT signalosome. The LAT signalosome propagates signal branching to three major signaling pathways, the calcium, the mitogen-activated protein kinase (MAPK) kinase and the nuclear factor NF-kappa-B (NF-kB) pathways, leading to the mobilization of transcription factors that are critical for gene expression and essential for T cell growth and differentiation. The T cell repertoire is generated in the thymus, by V-(D)-J rearrangement. This repertoire is then shaped by intrathymic selection events to generate a peripheral T cell pool of self-MH restricted, non-autoaggressive T cells. Post-thymic interaction of alpha-beta TR with the pMH complexes shapes TR structural and functional avidity. In Homo sapiens (Human), this protein is T cell receptor alpha variable 30.